The chain runs to 195 residues: Insertion element IS136 uncharacterized protein Atu4601 (195 aa).

An Integrase catalytic domain is found at Met-25–Ser-194.

In Agrobacterium fabrum (strain C58 / ATCC 33970) (Agrobacterium tumefaciens (strain C58)), this protein is Insertion element IS136 uncharacterized protein Atu4601.